We begin with the raw amino-acid sequence, 81 residues long: Cytotoxin 5 (81 aa).

A signal peptide spans 1–21; that stretch reads MKTLLLTLVVVTIVCLDLGYT. 4 disulfide bridges follow: Cys-24-Cys-42, Cys-35-Cys-59, Cys-63-Cys-74, and Cys-75-Cys-80.

This sequence belongs to the three-finger toxin family. Short-chain subfamily. Type IA cytotoxin sub-subfamily. Monomer in solution; Homodimer and oligomer in the presence of negatively charged lipids forming a pore with a size ranging between 20 and 30 Angstroms. As to expression, expressed by the venom gland.

The protein resides in the secreted. It is found in the target cell membrane. Functionally, shows cytolytic activity on many different cells by forming pore in lipid membranes. In vivo, increases heart rate or kills the animal by cardiac arrest. In addition, it binds to heparin with high affinity, interacts with Kv channel-interacting protein 1 (KCNIP1) in a calcium-independent manner, and binds to integrin alpha-V/beta-3 (ITGAV/ITGB3) with moderate affinity. The chain is Cytotoxin 5 from Naja atra (Chinese cobra).